Here is a 537-residue protein sequence, read N- to C-terminus: NAD(P)H-quinone oxidoreductase chain 4 3 (537 aa).

The next 13 helical transmembrane spans lie at 6–26 (FPWL…IPII), 36–56 (WYGL…FWHY), 87–107 (LSMP…FAAW), 115–135 (LFYG…VAQD), 136–156 (LLLF…LISI), 169–189 (FILY…ALAF), 209–229 (AIEL…LPIF), 243–263 (SAPG…YALI), 277–297 (FAPV…CCAF), 314–334 (MGFV…GAVL), 335–355 (QMVS…VTYE), 387–407 (LALP…GIAT), and 417–437 (VVVV…LLSL).

The protein belongs to the complex I subunit 4 family.

It localises to the cellular thylakoid membrane. It carries out the reaction a plastoquinone + NADH + (n+1) H(+)(in) = a plastoquinol + NAD(+) + n H(+)(out). It catalyses the reaction a plastoquinone + NADPH + (n+1) H(+)(in) = a plastoquinol + NADP(+) + n H(+)(out). NDH-1 shuttles electrons from NAD(P)H, via FMN and iron-sulfur (Fe-S) centers, to quinones in the respiratory chain. The immediate electron acceptor for the enzyme in this species is believed to be plastoquinone. Couples the redox reaction to proton translocation (for every two electrons transferred, four hydrogen ions are translocated across the cytoplasmic membrane), and thus conserves the redox energy in a proton gradient. This Trichormus variabilis (strain ATCC 29413 / PCC 7937) (Anabaena variabilis) protein is NAD(P)H-quinone oxidoreductase chain 4 3.